Here is a 218-residue protein sequence, read N- to C-terminus: Small ribosomal subunit protein uS3 (218 aa).

The KH type-2 domain occupies 38-106 (IREFINQRLS…RVHINILEIK (69 aa)).

The protein belongs to the universal ribosomal protein uS3 family. In terms of assembly, part of the 30S ribosomal subunit. Forms a tight complex with proteins S10 and S14.

Functionally, binds the lower part of the 30S subunit head. Binds mRNA in the 70S ribosome, positioning it for translation. The protein is Small ribosomal subunit protein uS3 of Bacillus licheniformis (strain ATCC 14580 / DSM 13 / JCM 2505 / CCUG 7422 / NBRC 12200 / NCIMB 9375 / NCTC 10341 / NRRL NRS-1264 / Gibson 46).